A 598-amino-acid chain; its full sequence is Probable ATP-dependent RNA helicase DDX52 (598 aa).

Lys15 carries the N6-acetyllysine modification. A Phosphoserine modification is found at Ser39. The segment at 59 to 98 (CGGLQTQQELQNEETTEGGLLERSKEPKKKKRKKMTADVP) is disordered. Positions 166–194 (QLDQEYKISPRLLQNILDAGFQVPTPIQM) match the Q motif motif. The 179-residue stretch at 197-375 (IPVMLHGREL…KLNLDNIVSV (179 aa)) folds into the Helicase ATP-binding domain. Residue 210-217 (APTGSGKT) coordinates ATP. Residues 319 to 322 (DESD) carry the DEAD box motif. One can recognise a Helicase C-terminal domain in the interval 386 to 547 (TVEQELLFVG…PVPEYIKGFQ (162 aa)). The interval 578 to 598 (AKQKKVAGQNSKKKETLKGKS) is disordered. The span at 589 to 598 (KKKETLKGKS) shows a compositional bias: basic and acidic residues.

Belongs to the DEAD box helicase family. DDX52/ROK1 subfamily.

The protein resides in the nucleus. Its subcellular location is the nucleolus. The catalysed reaction is ATP + H2O = ADP + phosphate + H(+). Functionally, required for efficient ribosome biogenesis. May control cell cycle progression by regulating translation of mRNAs that contain a terminal oligo pyrimidine (TOP) motif in their 5' UTRs, such as GTPBP4. This Rattus norvegicus (Rat) protein is Probable ATP-dependent RNA helicase DDX52 (Ddx52).